Reading from the N-terminus, the 153-residue chain is D-aminoacyl-tRNA deacylase (153 aa).

Residues 137–138 (GP) carry the Gly-cisPro motif, important for rejection of L-amino acids motif.

It belongs to the DTD family. In terms of assembly, homodimer.

Its subcellular location is the cytoplasm. The catalysed reaction is glycyl-tRNA(Ala) + H2O = tRNA(Ala) + glycine + H(+). It carries out the reaction a D-aminoacyl-tRNA + H2O = a tRNA + a D-alpha-amino acid + H(+). An aminoacyl-tRNA editing enzyme that deacylates mischarged D-aminoacyl-tRNAs. Also deacylates mischarged glycyl-tRNA(Ala), protecting cells against glycine mischarging by AlaRS. Acts via tRNA-based rather than protein-based catalysis; rejects L-amino acids rather than detecting D-amino acids in the active site. By recycling D-aminoacyl-tRNA to D-amino acids and free tRNA molecules, this enzyme counteracts the toxicity associated with the formation of D-aminoacyl-tRNA entities in vivo and helps enforce protein L-homochirality. In Dehalococcoides mccartyi (strain ATCC BAA-2266 / KCTC 15142 / 195) (Dehalococcoides ethenogenes (strain 195)), this protein is D-aminoacyl-tRNA deacylase.